The chain runs to 326 residues: Ribosomal RNA small subunit methyltransferase H (326 aa).

Residues 35-37 (GGY), Asp-53, Phe-80, Asp-101, and Gln-108 each bind S-adenosyl-L-methionine. The interval 260-306 (EGVSRHLPQASNAGAGNPPPSFQAVSRRAVKPLDAETRVNPRSRSAR) is disordered.

It belongs to the methyltransferase superfamily. RsmH family.

It is found in the cytoplasm. It catalyses the reaction cytidine(1402) in 16S rRNA + S-adenosyl-L-methionine = N(4)-methylcytidine(1402) in 16S rRNA + S-adenosyl-L-homocysteine + H(+). In terms of biological role, specifically methylates the N4 position of cytidine in position 1402 (C1402) of 16S rRNA. The protein is Ribosomal RNA small subunit methyltransferase H of Rhodospirillum rubrum (strain ATCC 11170 / ATH 1.1.1 / DSM 467 / LMG 4362 / NCIMB 8255 / S1).